The sequence spans 111 residues: UPF0145 protein RBAM_010660 (111 aa).

The protein belongs to the UPF0145 family.

The protein is UPF0145 protein RBAM_010660 of Bacillus velezensis (strain DSM 23117 / BGSC 10A6 / LMG 26770 / FZB42) (Bacillus amyloliquefaciens subsp. plantarum).